Here is a 213-residue protein sequence, read N- to C-terminus: Kynurenine formamidase (213 aa).

Residue W18 coordinates substrate. Zn(2+)-binding residues include H48, H52, and D54. H58 acts as the Proton donor/acceptor in catalysis. Zn(2+) is bound by residues H160 and E172.

Belongs to the Cyclase 1 superfamily. KynB family. As to quaternary structure, homodimer. The cofactor is Zn(2+).

It carries out the reaction N-formyl-L-kynurenine + H2O = L-kynurenine + formate + H(+). Its pathway is amino-acid degradation; L-tryptophan degradation via kynurenine pathway; L-kynurenine from L-tryptophan: step 2/2. Catalyzes the hydrolysis of N-formyl-L-kynurenine to L-kynurenine, the second step in the kynurenine pathway of tryptophan degradation. The sequence is that of Kynurenine formamidase from Burkholderia ambifaria (strain ATCC BAA-244 / DSM 16087 / CCUG 44356 / LMG 19182 / AMMD) (Burkholderia cepacia (strain AMMD)).